The sequence spans 213 residues: Translation initiation factor IF-3 (213 aa).

Residues 193-213 are disordered; sequence EKIASLPPLPPDNSGEPEDDE.

Belongs to the IF-3 family. As to quaternary structure, monomer.

The protein localises to the cytoplasm. In terms of biological role, IF-3 binds to the 30S ribosomal subunit and shifts the equilibrium between 70S ribosomes and their 50S and 30S subunits in favor of the free subunits, thus enhancing the availability of 30S subunits on which protein synthesis initiation begins. This chain is Translation initiation factor IF-3, found in Chlorobaculum tepidum (strain ATCC 49652 / DSM 12025 / NBRC 103806 / TLS) (Chlorobium tepidum).